The chain runs to 374 residues: Cell division protein DivIB (374 aa).

The segment at 1-90 is disordered; the sequence is MWKISNENDI…EEEHFADRLP (90 aa). Residues 1 to 103 lie on the Cytoplasmic side of the membrane; it reads MWKISNENDI…KTRNKRLYRR (103 aa). A compositionally biased stretch (basic and acidic residues) spans 39 to 53; it reads YLKKQAEEAASKGEN. Residues 56-75 show a composition bias toward polar residues; the sequence is AEVTITLQEQSQEEPQQHLP. The helical transmembrane segment at 104 to 124 threads the bilayer; sequence LAFILTCLGTAILVALYFVSP. Topologically, residues 125-374 are extracellular; the sequence is LSRLSEVTVS…GENQEVQQAE (250 aa). A POTRA domain is found at 126 to 197; sequence SRLSEVTVSG…NSFKIDIQEY (72 aa). Residues 325–374 form a disordered region; it reads KESEETGSEVSEDSAVENQEVVDPNAGVATDEANNGTPTNGENQEVQQAE. Positions 326-339 are enriched in acidic residues; sequence ESEETGSEVSEDSA. Residues 356-374 show a composition bias toward polar residues; sequence EANNGTPTNGENQEVQQAE.

It belongs to the FtsQ/DivIB family. DivIB subfamily.

The protein resides in the cell membrane. Functionally, cell division protein that may be involved in stabilizing or promoting the assembly of the division complex. This chain is Cell division protein DivIB, found in Enterococcus faecalis (strain ATCC 700802 / V583).